The chain runs to 396 residues: Phosphoglycerate kinase (396 aa).

Substrate-binding positions include 21–23, arginine 36, 59–62, arginine 119, and arginine 156; these read DFN and HLGK. Residues lysine 206, glycine 294, glutamate 325, and 352–355 contribute to the ATP site; that span reads GGDS.

It belongs to the phosphoglycerate kinase family. In terms of assembly, monomer.

Its subcellular location is the cytoplasm. The catalysed reaction is (2R)-3-phosphoglycerate + ATP = (2R)-3-phospho-glyceroyl phosphate + ADP. The protein operates within carbohydrate degradation; glycolysis; pyruvate from D-glyceraldehyde 3-phosphate: step 2/5. The sequence is that of Phosphoglycerate kinase from Listeria monocytogenes serotype 4a (strain HCC23).